The primary structure comprises 737 residues: Cellulose synthase-like protein E1 (737 aa).

A run of 2 helical transmembrane segments spans residues 26-45 (AVYR…VLYY) and 58-78 (AAWL…VIAQ). Active-site residues include Asp-146 and Asp-451. Transmembrane regions (helical) follow at residues 528-548 (LWAA…LGLV), 551-571 (TPLF…VFCV), 654-674 (VIIA…LSQI), 683-703 (WNVF…NMPI), and 716-736 (IPTA…LVPI).

It belongs to the glycosyltransferase 2 family. Plant cellulose synthase-like E subfamily.

It is found in the golgi apparatus membrane. Thought to be a Golgi-localized beta-glycan synthase that polymerize the backbones of noncellulosic polysaccharides (hemicelluloses) of plant cell wall. In Oryza sativa subsp. japonica (Rice), this protein is Cellulose synthase-like protein E1 (CSLE1).